The primary structure comprises 962 residues: Glycine dehydrogenase (decarboxylating) (962 aa).

Position 709 is an N6-(pyridoxal phosphate)lysine (Lys709).

It belongs to the GcvP family. As to quaternary structure, the glycine cleavage system is composed of four proteins: P, T, L and H. Requires pyridoxal 5'-phosphate as cofactor.

The catalysed reaction is N(6)-[(R)-lipoyl]-L-lysyl-[glycine-cleavage complex H protein] + glycine + H(+) = N(6)-[(R)-S(8)-aminomethyldihydrolipoyl]-L-lysyl-[glycine-cleavage complex H protein] + CO2. The glycine cleavage system catalyzes the degradation of glycine. The P protein binds the alpha-amino group of glycine through its pyridoxal phosphate cofactor; CO(2) is released and the remaining methylamine moiety is then transferred to the lipoamide cofactor of the H protein. In Shewanella sp. (strain MR-7), this protein is Glycine dehydrogenase (decarboxylating).